A 239-amino-acid polypeptide reads, in one-letter code: Small ribosomal subunit protein uS3 (239 aa).

Residues 39 to 107 form the KH type-2 domain; it reads VRQVLRKKMS…SVHINVIEVR (69 aa). The segment at 214 to 239 is disordered; that stretch reads GQEKQDDGSRGDRNADRSSRRSREVR. A compositionally biased stretch (basic and acidic residues) spans 216–239; sequence EKQDDGSRGDRNADRSSRRSREVR.

It belongs to the universal ribosomal protein uS3 family. Part of the 30S ribosomal subunit. Forms a tight complex with proteins S10 and S14.

Functionally, binds the lower part of the 30S subunit head. Binds mRNA in the 70S ribosome, positioning it for translation. The chain is Small ribosomal subunit protein uS3 from Xylella fastidiosa (strain M12).